The chain runs to 89 residues: MVLSVNDRKEIMGKFQASAADTGSPAVQVALITERIKYLSGHLKANPKDFAGERGLTKLVGQRKRLLSYLKKKDFAKYTQVTKELNLRK.

Belongs to the universal ribosomal protein uS15 family. In terms of assembly, part of the 30S ribosomal subunit. Forms a bridge to the 50S subunit in the 70S ribosome, contacting the 23S rRNA.

Its function is as follows. One of the primary rRNA binding proteins, it binds directly to 16S rRNA where it helps nucleate assembly of the platform of the 30S subunit by binding and bridging several RNA helices of the 16S rRNA. Forms an intersubunit bridge (bridge B4) with the 23S rRNA of the 50S subunit in the ribosome. The chain is Small ribosomal subunit protein uS15 from Elusimicrobium minutum (strain Pei191).